A 196-amino-acid chain; its full sequence is Large ribosomal subunit protein uL10 (196 aa).

Residues K169–E196 form a disordered region. The span at E172–E196 shows a compositional bias: low complexity.

This sequence belongs to the universal ribosomal protein uL10 family. As to quaternary structure, part of the ribosomal stalk of the 50S ribosomal subunit. The N-terminus interacts with L11 and the large rRNA to form the base of the stalk. The C-terminus forms an elongated spine to which L12 dimers bind in a sequential fashion forming a multimeric L10(L12)X complex.

Its function is as follows. Forms part of the ribosomal stalk, playing a central role in the interaction of the ribosome with GTP-bound translation factors. This Mycobacterium avium (strain 104) protein is Large ribosomal subunit protein uL10.